Here is a 73-residue protein sequence, read N- to C-terminus: UPF0154 protein MG335.1 (73 aa).

A helical membrane pass occupies residues 6 to 26 (LALGLGIPLSLLVGMILGYFI).

This sequence belongs to the UPF0154 family.

The protein resides in the membrane. The chain is UPF0154 protein MG335.1 from Mycoplasma genitalium (strain ATCC 33530 / DSM 19775 / NCTC 10195 / G37) (Mycoplasmoides genitalium).